The primary structure comprises 35 residues: Mu-theraphotoxin-Hhn1a (35 aa).

3 disulfide bridges follow: cysteine 2–cysteine 17, cysteine 9–cysteine 24, and cysteine 16–cysteine 31.

It belongs to the neurotoxin 10 (Hwtx-1) family. 22 (Htx-4) subfamily. Monomer. As to expression, expressed by the venom gland.

Its subcellular location is the secreted. Inhibits selectively tetrodotoxin-sensitive voltage-gated sodium channels (Nav). Does not act by binding to receptor site 3 to slow the inactivation kinetics of sodium currents. The sequence is that of Mu-theraphotoxin-Hhn1a from Cyriopagopus hainanus (Chinese bird spider).